A 230-amino-acid polypeptide reads, in one-letter code: Orotidine 5'-phosphate decarboxylase (230 aa).

Substrate-binding positions include aspartate 11, lysine 34, aspartate 61 to threonine 70, threonine 117, arginine 179, glutamine 188, glycine 208, and arginine 209. Residue lysine 63 is the Proton donor of the active site.

Belongs to the OMP decarboxylase family. Type 1 subfamily. In terms of assembly, homodimer.

It catalyses the reaction orotidine 5'-phosphate + H(+) = UMP + CO2. Its pathway is pyrimidine metabolism; UMP biosynthesis via de novo pathway; UMP from orotate: step 2/2. Functionally, catalyzes the decarboxylation of orotidine 5'-monophosphate (OMP) to uridine 5'-monophosphate (UMP). This is Orotidine 5'-phosphate decarboxylase from Streptococcus equi subsp. zooepidemicus (strain MGCS10565).